Reading from the N-terminus, the 118-residue chain is Protein YLR162W (118 aa).

Polar residues predominate over residues 1–20 (MQHTLTRTASLPERSSSAHS). The tract at residues 1-26 (MQHTLTRTASLPERSSSAHSAATALP) is disordered. The chain crosses the membrane as a helical span at residues 38–58 (LVPLLCIFWFVFVSMSPLPPA).

It localises to the membrane. Functionally, overexpression confers resistance to the antimicrobial peptide MiAMP1. This chain is Protein YLR162W, found in Saccharomyces cerevisiae (strain ATCC 204508 / S288c) (Baker's yeast).